The following is a 420-amino-acid chain: Xyloglucan O-acetyltransferase 4 (420 aa).

At 1–30 (MTMHEKMKLPSCSCSAFKCGKKDRWLNMER) the chain is on the cytoplasmic side. A helical; Signal-anchor for type II membrane protein membrane pass occupies residues 31-51 (PIPFLLIGLTTILSVFILYTL). The Lumenal segment spans residues 52–420 (NPLKFVIEHN…LLLAVLRRLD (369 aa)). Disulfide bonds link C78–C128, C99–C164, C108–C400, and C323–C396. N96 carries N-linked (GlcNAc...) asparagine glycosylation. The GDS motif signature appears at 151–153 (GDS). S153 serves as the catalytic Nucleophile. N192, N212, N270, and N324 each carry an N-linked (GlcNAc...) asparagine glycan. Catalysis depends on D395, which acts as the Proton donor. Positions 395-398 (DCVH) match the DXXH motif motif. Residue H398 is the Proton acceptor of the active site.

The protein belongs to the PC-esterase family. TBL subfamily.

Its subcellular location is the golgi apparatus membrane. Xyloglucan acetyltransferase that catalyzes the acetylation of fucosylated Gal residues on xyloglucan side chains. Predominantly catalyze 6-O-monoacetylation of Gal residues in the Fuc-Gal-Xyl trisaccharide side chains of xyloglucan oligomers. This is Xyloglucan O-acetyltransferase 4 from Populus trichocarpa (Western balsam poplar).